The following is a 943-amino-acid chain: Translation initiation factor IF-2 (943 aa).

Over residues 99–113 the composition is skewed to low complexity; it reads VKAAQTQAAPVQPEQ. The disordered stretch occupies residues 99 to 354; the sequence is VKAAQTQAAP…LEPNQHAFQA (256 aa). The span at 117–141 shows a compositional bias: basic and acidic residues; it reads DAVKARAEAAARAEARAKAEAEAAK. The segment covering 145–172 has biased composition (low complexity); it reads AKAGNKAKPAAQKPTEAKAETAPVAAET. Over residues 173–197 the composition is skewed to basic and acidic residues; the sequence is KPAEPKEKAVKPKHERNGKGKDAKK. The segment covering 200–215 has biased composition (low complexity); sequence KPAAPAVPQPVVSAEE. Basic and acidic residues predominate over residues 216–250; that stretch reads QAQRDEEARRAAALRAHQEALLKEKQERQARREAM. Low complexity predominate over residues 251-264; the sequence is KQQAEQQAKAAQEA. Basic and acidic residues-rich tracts occupy residues 295–308 and 319–335; these read AKKE…DEGQ and GGRD…ERVR. In terms of domain architecture, tr-type G spans 443–612; that stretch reads PRPPVVTVMG…LLEAEVLELT (170 aa). The G1 stretch occupies residues 452 to 459; the sequence is GHVDHGKT. 452-459 contributes to the GTP binding site; sequence GHVDHGKT. Positions 477-481 are G2; sequence GITQH. The tract at residues 498-501 is G3; the sequence is DTPG. Residues 498-502 and 552-555 contribute to the GTP site; these read DTPGH and NKID. The tract at residues 552–555 is G4; sequence NKID. The interval 588 to 590 is G5; the sequence is SAK.

This sequence belongs to the TRAFAC class translation factor GTPase superfamily. Classic translation factor GTPase family. IF-2 subfamily.

It localises to the cytoplasm. In terms of biological role, one of the essential components for the initiation of protein synthesis. Protects formylmethionyl-tRNA from spontaneous hydrolysis and promotes its binding to the 30S ribosomal subunits. Also involved in the hydrolysis of GTP during the formation of the 70S ribosomal complex. The chain is Translation initiation factor IF-2 from Neisseria gonorrhoeae (strain ATCC 700825 / FA 1090).